The sequence spans 165 residues: Small ribosomal subunit protein uS5 (165 aa).

One can recognise an S5 DRBM domain in the interval 10–73 (LKEKVVFINR…EDAKKNLVEV (64 aa)).

It belongs to the universal ribosomal protein uS5 family. As to quaternary structure, part of the 30S ribosomal subunit. Contacts proteins S4 and S8.

In terms of biological role, with S4 and S12 plays an important role in translational accuracy. Located at the back of the 30S subunit body where it stabilizes the conformation of the head with respect to the body. In Clostridium acetobutylicum (strain ATCC 824 / DSM 792 / JCM 1419 / IAM 19013 / LMG 5710 / NBRC 13948 / NRRL B-527 / VKM B-1787 / 2291 / W), this protein is Small ribosomal subunit protein uS5.